The primary structure comprises 692 residues: Glycine--tRNA ligase beta subunit (692 aa).

It belongs to the class-II aminoacyl-tRNA synthetase family. In terms of assembly, tetramer of two alpha and two beta subunits.

It is found in the cytoplasm. The catalysed reaction is tRNA(Gly) + glycine + ATP = glycyl-tRNA(Gly) + AMP + diphosphate. The polypeptide is Glycine--tRNA ligase beta subunit (Pseudoalteromonas atlantica (strain T6c / ATCC BAA-1087)).